Here is a 60-residue protein sequence, read N- to C-terminus: uncharacterized protein (60 aa).

The protein resides in the host cytoplasm. This is an uncharacterized protein from Escherichia phage Mu (Bacteriophage Mu).